Consider the following 115-residue polypeptide: NADH-ubiquinone oxidoreductase chain 3 (115 aa).

The next 3 membrane-spanning stretches (helical) occupy residues F3–W23, F55–L75, and L84–Y104.

The protein belongs to the complex I subunit 3 family. As to quaternary structure, core subunit of respiratory chain NADH dehydrogenase (Complex I) which is composed of 45 different subunits. Interacts with TMEM186. Interacts with TMEM242.

Its subcellular location is the mitochondrion inner membrane. It catalyses the reaction a ubiquinone + NADH + 5 H(+)(in) = a ubiquinol + NAD(+) + 4 H(+)(out). In terms of biological role, core subunit of the mitochondrial membrane respiratory chain NADH dehydrogenase (Complex I) which catalyzes electron transfer from NADH through the respiratory chain, using ubiquinone as an electron acceptor. Essential for the catalytic activity of complex I. The polypeptide is NADH-ubiquinone oxidoreductase chain 3 (Pan troglodytes (Chimpanzee)).